We begin with the raw amino-acid sequence, 401 residues long: Imidazolonepropionase (401 aa).

2 residues coordinate Fe(3+): histidine 70 and histidine 72. Zn(2+) is bound by residues histidine 70 and histidine 72. The 4-imidazolone-5-propanoate site is built by arginine 79, tyrosine 142, and histidine 175. N-formimidoyl-L-glutamate is bound at residue tyrosine 142. Histidine 238 is a Fe(3+) binding site. Residue histidine 238 coordinates Zn(2+). Glutamine 241 lines the 4-imidazolone-5-propanoate pocket. Residue aspartate 313 coordinates Fe(3+). Aspartate 313 provides a ligand contact to Zn(2+). Positions 315 and 317 each coordinate N-formimidoyl-L-glutamate. Threonine 318 is a 4-imidazolone-5-propanoate binding site.

Belongs to the metallo-dependent hydrolases superfamily. HutI family. The cofactor is Zn(2+). Fe(3+) serves as cofactor.

It is found in the cytoplasm. It carries out the reaction 4-imidazolone-5-propanoate + H2O = N-formimidoyl-L-glutamate. It participates in amino-acid degradation; L-histidine degradation into L-glutamate; N-formimidoyl-L-glutamate from L-histidine: step 3/3. Its function is as follows. Catalyzes the hydrolytic cleavage of the carbon-nitrogen bond in imidazolone-5-propanoate to yield N-formimidoyl-L-glutamate. It is the third step in the universal histidine degradation pathway. The chain is Imidazolonepropionase from Xanthomonas oryzae pv. oryzae (strain MAFF 311018).